The primary structure comprises 552 residues: Glutamate--tRNA ligase (552 aa).

Positions 102-112 (PNPSGPLHIGH) match the 'HIGH' region motif.

The protein belongs to the class-I aminoacyl-tRNA synthetase family. Glutamate--tRNA ligase type 2 subfamily.

Its subcellular location is the cytoplasm. It carries out the reaction tRNA(Glu) + L-glutamate + ATP = L-glutamyl-tRNA(Glu) + AMP + diphosphate. Functionally, catalyzes the attachment of glutamate to tRNA(Glu) in a two-step reaction: glutamate is first activated by ATP to form Glu-AMP and then transferred to the acceptor end of tRNA(Glu). This chain is Glutamate--tRNA ligase, found in Methanothermobacter marburgensis (strain ATCC BAA-927 / DSM 2133 / JCM 14651 / NBRC 100331 / OCM 82 / Marburg) (Methanobacterium thermoautotrophicum).